The primary structure comprises 542 residues: Katanin p60 ATPase-containing subunit A-like 2 (542 aa).

The region spanning 25–57 (RRKNLLILIMHYLLQEGYMDSANSLEQETKISL) is the LisH domain. Disordered stretches follow at residues 94 to 126 (LDHDSRVQSKPRSAGKLRRAGSNSTQGLPRIAQ) and 142 to 168 (HAHQKALSRENSKQENGGNSPREASEI). Polar residues predominate over residues 114-126 (GSNSTQGLPRIAQ). Position 298 to 305 (298 to 305 (GPPGTGKT)) interacts with ATP.

This sequence belongs to the AAA ATPase family. Katanin p60 subunit A1 subfamily. A-like 2 sub-subfamily.

It localises to the cytoplasm. The protein resides in the cytoskeleton. Its subcellular location is the spindle. It is found in the spindle pole. It catalyses the reaction n ATP + n H2O + a microtubule = n ADP + n phosphate + (n+1) alpha/beta tubulin heterodimers.. Its function is as follows. Severs microtubules in vitro in an ATP-dependent manner. This activity may promote rapid reorganization of cellular microtubule arrays. The sequence is that of Katanin p60 ATPase-containing subunit A-like 2 (katnal2) from Xenopus tropicalis (Western clawed frog).